The primary structure comprises 180 residues: Inosine/xanthosine triphosphatase (180 aa).

8–13 (TTNPAK) contacts substrate. Residues Asp-38 and Glu-68 each coordinate Mg(2+). 68-69 (EA) lines the substrate pocket.

This sequence belongs to the YjjX NTPase family. In terms of assembly, homodimer. Mg(2+) serves as cofactor. Requires Mn(2+) as cofactor.

The enzyme catalyses XTP + H2O = XDP + phosphate + H(+). It carries out the reaction ITP + H2O = IDP + phosphate + H(+). In terms of biological role, phosphatase that hydrolyzes non-canonical purine nucleotides such as XTP and ITP to their respective diphosphate derivatives. Probably excludes non-canonical purines from DNA/RNA precursor pool, thus preventing their incorporation into DNA/RNA and avoiding chromosomal lesions. The chain is Inosine/xanthosine triphosphatase from Yersinia pestis bv. Antiqua (strain Antiqua).